We begin with the raw amino-acid sequence, 188 residues long: Probable nicotinate-nucleotide adenylyltransferase (188 aa).

This sequence belongs to the NadD family.

The enzyme catalyses nicotinate beta-D-ribonucleotide + ATP + H(+) = deamido-NAD(+) + diphosphate. It participates in cofactor biosynthesis; NAD(+) biosynthesis; deamido-NAD(+) from nicotinate D-ribonucleotide: step 1/1. Catalyzes the reversible adenylation of nicotinate mononucleotide (NaMN) to nicotinic acid adenine dinucleotide (NaAD). The sequence is that of Probable nicotinate-nucleotide adenylyltransferase from Rhizobium meliloti (strain 1021) (Ensifer meliloti).